A 531-amino-acid polypeptide reads, in one-letter code: Peroxinectin A (531 aa).

An N-terminal signal peptide occupies residues 1–21 (MRLNLISFFIIFTILVSISNS). N62 is a glycosylation site (N-linked (GlcNAc...) asparagine). H101 (proton acceptor) is an active-site residue. N-linked (GlcNAc...) asparagine glycosylation is found at N131 and N338.

This sequence belongs to the peroxidase family.

It localises to the secreted. It carries out the reaction 2 a phenolic donor + H2O2 = 2 a phenolic radical donor + 2 H2O. The chain is Peroxinectin A (poxA) from Dictyostelium discoideum (Social amoeba).